The primary structure comprises 222 residues: UPF0758 protein YicR (222 aa).

An MPN domain is found at 100–222 (PLLSPEMTRE…YVSFAERGWI (123 aa)). Residues histidine 171, histidine 173, and aspartate 184 each coordinate Zn(2+). Positions 171 to 184 (HNHPSGCAEPSKAD) match the JAMM motif motif.

Belongs to the UPF0758 family. YicR subfamily.

This chain is UPF0758 protein YicR, found in Escherichia coli O81 (strain ED1a).